Consider the following 118-residue polypeptide: cAMP-responsive element-binding protein-like 2 (118 aa).

The segment at 1 to 25 is disordered; that stretch reads MDDSKVSGGKVKKPGKRGRKPAKID. Positions 10–21 are enriched in basic residues; that stretch reads KVKKPGKRGRKP. Residues 23–86 form the bZIP domain; the sequence is KIDLKAKLER…AAMDQGKIPS (64 aa). A basic motif region spans residues 29–60; that stretch reads KLERSRQSARECRARKKLRYQYLEELVSSRER. The leucine-zipper stretch occupies residues 62 to 69; the sequence is ICALREEL.

The protein belongs to the bZIP family. ATF subfamily.

The protein localises to the nucleus. Its function is as follows. Probable regulator of creb1 transcriptional activity which is involved in adipose cells differentiation. May also play a regulatory role in the cell cycle. The chain is cAMP-responsive element-binding protein-like 2 (crebl2) from Xenopus tropicalis (Western clawed frog).